A 355-amino-acid polypeptide reads, in one-letter code: MSVLPFLRIYAPLNAVLAAPGLLAVAALTIPDMSGRSRLALAALLAVIWGAYLLQLAATLLKRRAGVVRDRTPKIAIDVLAVLVPLAAFLLDGSPDWSLYCAVWLLKPLRDSTFFPVLGRVLANEARNLIGVTTLFGVVLFAVALAAYVIERDIQPEKFGSIPQAMWWAVVTLSTTGYGDTIPQSFAGRVLAGAVMMSGIGIFGLWAGILATGFYQEVRRGDFVRNWQLVAAVPLFQKLGPAVLVEIVRALRARTVPAGAVICRIGEPGDRMFFVVEGSVSVATPNPVELGPGAFFGEMALISGEPRSATVSAATTVSLLSLHSADFQMLCSSSPEIAEIFRKTALERRGAAASA.

At 1 to 12 (MSVLPFLRIYAP) the chain is on the cytoplasmic side. Residues 13–30 (LNAVLAAPGLLAVAALTI) traverse the membrane as a helical segment. Topologically, residues 31–38 (PDMSGRSR) are periplasmic. Residues 39-61 (LALAALLAVIWGAYLLQLAATLL) traverse the membrane as a helical segment. Residues 62-74 (KRRAGVVRDRTPK) lie on the Cytoplasmic side of the membrane. A helical membrane pass occupies residues 75-94 (IAIDVLAVLVPLAAFLLDGS). A helical membrane pass occupies residues 95–112 (PDWSLYCAVWLLKPLRDS). Topologically, residues 113-129 (TFFPVLGRVLANEARNL) are cytoplasmic. A helical membrane pass occupies residues 130-150 (IGVTTLFGVVLFAVALAAYVI). Over 151-161 (ERDIQPEKFGS) the chain is Periplasmic. The segment at residues 162–180 (IPQAMWWAVVTLSTTGYGD) is an intramembrane region (pore-forming). Positions 175 to 180 (TTGYGD) match the Selectivity filter motif. Topologically, residues 181 to 185 (TIPQS) are periplasmic. Residues 186-210 (FAGRVLAGAVMMSGIGIFGLWAGIL) traverse the membrane as a helical segment. Over 211–355 (ATGFYQEVRR…LERRGAAASA (145 aa)) the chain is Cytoplasmic. 3',5'-cyclic AMP contacts are provided by residues 297–298 (GE), 307–308 (RS), and arginine 348.

This sequence belongs to the potassium channel family. In terms of assembly, homotetramer.

The protein resides in the cell membrane. Its function is as follows. Cyclic nucleotide-regulated potassium channel activated by cAMP. The chain is Cyclic nucleotide-gated potassium channel mll3241 from Mesorhizobium japonicum (strain LMG 29417 / CECT 9101 / MAFF 303099) (Mesorhizobium loti (strain MAFF 303099)).